The sequence spans 238 residues: Cysteine-rich venom protein pseudechetoxin (238 aa).

The N-terminal stretch at 1 to 19 (MIAFIVLLSLAAVLQQSSG) is a signal peptide. A propeptide spanning residues 20–27 (TADFASES) is cleaved from the precursor. Residues 38–164 (VDKHNALRRS…SSKYLYVCQY (127 aa)) enclose the SCP domain. Positions 51 and 106 each coordinate Zn(2+). Intrachain disulfides connect cysteine 75–cysteine 153, cysteine 92–cysteine 165, cysteine 148–cysteine 162, cysteine 184–cysteine 191, cysteine 187–cysteine 196, cysteine 200–cysteine 233, cysteine 209–cysteine 227, and cysteine 218–cysteine 231. The ShKT domain maps to 200–233 (CKRNNDFSNCKSLAKKSKCQTEWIKKKCPASCFC).

Expressed by the venom gland.

Its subcellular location is the secreted. In terms of biological role, blocks olfactory (CNGA2) and retinal (CNGA1) cyclic nucleotide-gated (CNG) ion channel currents. Does not inhibit retinal (CNGA3) currents. It forms high-affinity contacts with the pore turret region and most likely inhibits CNG channel current by blocking the external entrance to the transmembrane pore. Is really more potent that Pseudecin. Does not affect neither depolarization- nor caffeine-induced contraction arterial smooth muscle. This is Cysteine-rich venom protein pseudechetoxin from Pseudechis australis (Mulga snake).